We begin with the raw amino-acid sequence, 442 residues long: Serine--tRNA ligase (442 aa).

249–251 (TSE) lines the L-serine pocket. 280–282 (RSE) is a binding site for ATP. Glu-303 provides a ligand contact to L-serine. Residue 367 to 370 (EISS) participates in ATP binding. Residue Ser-402 participates in L-serine binding.

This sequence belongs to the class-II aminoacyl-tRNA synthetase family. Type-1 seryl-tRNA synthetase subfamily. In terms of assembly, homodimer. The tRNA molecule binds across the dimer.

The protein resides in the cytoplasm. It carries out the reaction tRNA(Ser) + L-serine + ATP = L-seryl-tRNA(Ser) + AMP + diphosphate + H(+). The catalysed reaction is tRNA(Sec) + L-serine + ATP = L-seryl-tRNA(Sec) + AMP + diphosphate + H(+). Its pathway is aminoacyl-tRNA biosynthesis; selenocysteinyl-tRNA(Sec) biosynthesis; L-seryl-tRNA(Sec) from L-serine and tRNA(Sec): step 1/1. Its function is as follows. Catalyzes the attachment of serine to tRNA(Ser). Is also able to aminoacylate tRNA(Sec) with serine, to form the misacylated tRNA L-seryl-tRNA(Sec), which will be further converted into selenocysteinyl-tRNA(Sec). This Acidovorax sp. (strain JS42) protein is Serine--tRNA ligase.